The chain runs to 122 residues: Large ribosomal subunit protein uL14 (122 aa).

It belongs to the universal ribosomal protein uL14 family. Part of the 50S ribosomal subunit. Forms a cluster with proteins L3 and L19. In the 70S ribosome, L14 and L19 interact and together make contacts with the 16S rRNA in bridges B5 and B8.

Its function is as follows. Binds to 23S rRNA. Forms part of two intersubunit bridges in the 70S ribosome. This is Large ribosomal subunit protein uL14 from Alkaliphilus metalliredigens (strain QYMF).